The chain runs to 423 residues: Diels-Alderase pyiF (423 aa).

An N-terminal signal peptide occupies residues 1–17; the sequence is MLPSFIFVYSLLATATA. N-linked (GlcNAc...) asparagine glycosylation is found at Asn-60, Asn-92, and Asn-219.

The protein belongs to the Diels-Alderase family.

Its pathway is mycotoxin biosynthesis. Its function is as follows. Diels-Alderase; part of the gene cluster that mediates the biosynthesis of the mycotoxin pyrichalasin H, a tyrosine-derived cytochalasan that inhibits the growth of rice seedlings, but also inhibits lymphocyte capping and actin polymerization and alters cell morphology. Pyrichalasin H is indicated as the responsible agent for the genus-specific pathogenicity of M.grisea toward crabgrass. The first step in the pathway is catalyzed by the O-methyltransferase pyiA which methylates free tyrosine to generate the precursor O-methyltyrosine. The hybrid PKS-NRPS pyiS, assisted by the enoyl reductase pyiC, are responsible for fusion of the O-methyltyrosine precursor and the polyketide backbone. The polyketide synthase module (PKS) of pyiS is responsible for the synthesis of the polyketide backbone and the downstream nonribosomal peptide synthetase (NRPS) amidates the carboxyl end of the polyketide with the O-methyltyrosine precursor. As the NRPS A-domain demonstrates substrate tolerance, pyiS can also use phenylalanine, tyrosine and even para-chlorophenylalanine as amino acid precursor, which leads to the production of novel cytochalasans, including halogenated cytochalasans. Because pyiS lacks a designated enoylreductase (ER) domain, the required activity is provided the enoyl reductase pyiC. Reduction by the hydrolyase pyiE leads to 1,5-dihydropyrrolone, which is substrate for dehydration and intra-molecular Diels-Alder cyclization by the Diels-Alderase pyiF to yield the required isoindolone-fused macrocycle. The tailoring cytochrome P450 monooxygenases piyD and piyG catalyze the hydroxylation at C-18 and C-7, respectivily, whereas the short-chain dehydrogenase/reductase pyiH reduces the carbonyl at C-21 in preparation for the transfer of an acetyl group by the acetyltransferase pyiB. These 3 reactions whose order is not clear yet, lead to the production of O-methylpyrichalasin J, a deacetylated pyrichalasin H. Finally, pyiB to converts O-methylpyrichalasin J into the final product pyrichalasin H via acetylation of C-21. The sequence is that of Diels-Alderase pyiF from Pyricularia grisea (Crabgrass-specific blast fungus).